The following is a 147-amino-acid chain: Large ribosomal subunit protein bL21 (147 aa).

The disordered stretch occupies residues 115–147 (KSIKVGKPTPKSSSKKEETVKKETKPKSEKSTN). Residues 128–147 (SKKEETVKKETKPKSEKSTN) are compositionally biased toward basic and acidic residues.

It belongs to the bacterial ribosomal protein bL21 family. As to quaternary structure, part of the 50S ribosomal subunit. Contacts protein L20.

Its function is as follows. This protein binds to 23S rRNA in the presence of protein L20. In Prochlorococcus marinus (strain MIT 9215), this protein is Large ribosomal subunit protein bL21.